A 289-amino-acid chain; its full sequence is Xylosylprotein 4-beta-galactosyltransferase (289 aa).

Over 1–6 (MKLKTR) the chain is Cytoplasmic. Residues 7–27 (LILSGTILISLAACYFLVLLV) form a helical; Signal-anchor for type II membrane protein membrane-spanning segment. The Lumenal portion of the chain corresponds to 28–289 (LDLEITRDLM…DLNWTPYCKS (262 aa)). Position 58-62 (58-62 (PYRDR)) interacts with UDP-alpha-D-galactose. Asn81 and Asn90 each carry an N-linked (GlcNAc...) asparagine glycan. Residues 97-99 (FNR), 123-124 (VD), Tyr154, and Trp184 contribute to the UDP-alpha-D-galactose site. Asp124 contacts Mn(2+). 186–189 (LEDD) provides a ligand contact to N-acetyl-D-glucosamine. Asn201 is a glycosylation site (N-linked (GlcNAc...) asparagine). The tract at residues 214–236 (NTFRHIHGPKRKRDYTPKKNDKN) is disordered. Basic residues predominate over residues 217–226 (RHIHGPKRKR). His218 is a Mn(2+) binding site. A UDP-alpha-D-galactose-binding site is contributed by 218–220 (HIH). The span at 227–236 (DYTPKKNDKN) shows a compositional bias: basic and acidic residues.

The protein belongs to the glycosyltransferase 7 family. The cofactor is Mn(2+).

Its subcellular location is the membrane. It catalyses the reaction 3-O-(beta-D-xylosyl)-L-seryl-[protein] + UDP-alpha-D-galactose = 3-O-(beta-D-galactosyl-(1-&gt;4)-beta-D-xylosyl)-L-seryl-[protein] + UDP + H(+). The protein operates within protein modification; protein glycosylation. Functionally, glycosyltransferase required for the biosynthesis of the tetrasaccharide (GlcA-Gal-Gal-Xyl-)Ser core linker of heparan sulfate and chondroitin sulfate. Required for embryonic development. Involved in vulval epithelium invagination. Required for axon regeneration after injury. The sequence is that of Xylosylprotein 4-beta-galactosyltransferase (sqv-3) from Caenorhabditis elegans.